The primary structure comprises 173 residues: ATP-dependent protease subunit HslV (173 aa).

T2 is a catalytic residue. Positions 158, 161, and 164 each coordinate Na(+).

The protein belongs to the peptidase T1B family. HslV subfamily. In terms of assembly, a double ring-shaped homohexamer of HslV is capped on each side by a ring-shaped HslU homohexamer. The assembly of the HslU/HslV complex is dependent on binding of ATP.

It localises to the cytoplasm. The catalysed reaction is ATP-dependent cleavage of peptide bonds with broad specificity.. With respect to regulation, allosterically activated by HslU binding. Functionally, protease subunit of a proteasome-like degradation complex believed to be a general protein degrading machinery. In Mannheimia succiniciproducens (strain KCTC 0769BP / MBEL55E), this protein is ATP-dependent protease subunit HslV.